We begin with the raw amino-acid sequence, 525 residues long: GMP synthase [glutamine-hydrolyzing] (525 aa).

One can recognise a Glutamine amidotransferase type-1 domain in the interval Arg9–Leu207. The active-site Nucleophile is the Cys86. Residues His181 and Glu183 contribute to the active site. A GMPS ATP-PPase domain is found at Trp208–Arg400. Ser235 to Ser241 serves as a coordination point for ATP.

As to quaternary structure, homodimer.

It carries out the reaction XMP + L-glutamine + ATP + H2O = GMP + L-glutamate + AMP + diphosphate + 2 H(+). The protein operates within purine metabolism; GMP biosynthesis; GMP from XMP (L-Gln route): step 1/1. Catalyzes the synthesis of GMP from XMP. This chain is GMP synthase [glutamine-hydrolyzing], found in Salmonella typhimurium (strain LT2 / SGSC1412 / ATCC 700720).